A 568-amino-acid polypeptide reads, in one-letter code: MARVEL domain-containing protein 2 (568 aa).

2 disordered regions span residues 1–72 (MSGG…YPSD) and 116–163 (SGGV…SYNS). At 1–211 (MSGGGSSSGP…YMKSWAGLLR (211 aa)) the chain is on the cytoplasmic side. Residues 29-46 (ADPRHPETNLETLHDRDL) are compositionally biased toward basic and acidic residues. Residues 52–62 (PLPPPPLPLHP) are compositionally biased toward pro residues. The region spanning 205–379 (SWAGLLRILC…SAMVSLKLWR (175 aa)) is the MARVEL domain. A helical membrane pass occupies residues 212-232 (ILCIVELLLGAAVFACVTAYI). Topologically, residues 233-266 (HKDNEWYNMFGYSQPYGYTASMQGGYYYSGPKTP) are extracellular. A helical transmembrane segment spans residues 267-287 (FVLVVAGLAWIVTIILLVLGM). Residues 288 to 303 (SMYYRTILLDSTWWPL) lie on the Cytoplasmic side of the membrane. A helical membrane pass occupies residues 304–324 (TEFGINISLFILYMAGAIVYV). Over 325–354 (NDTNRGGLCYYQLFNTPVNASFCRVEGGQT) the chain is Extracellular. The chain crosses the membrane as a helical span at residues 355–375 (AAIIFLFVSMLMYFISAMVSL). Residues 376-568 (KLWRHESARK…KVMDWNDGYN (193 aa)) are Cytoplasmic-facing. Positions 451 to 562 (PDYVAKYQAI…RIQEYDKVMD (112 aa)) constitute an OCEL domain. The stretch at 462–559 (AEDERERYKA…IKQRIQEYDK (98 aa)) forms a coiled coil.

It belongs to the ELL/occludin family.

The protein resides in the cell membrane. It localises to the cell junction. The protein localises to the tight junction. Functionally, may play a role in the formation of the epithelial barrier. The protein is MARVEL domain-containing protein 2 (marveld2) of Xenopus tropicalis (Western clawed frog).